Consider the following 190-residue polypeptide: MDPPVILHSPNCSCQFCSSELPSTHTCGSQDRTVPLHVEATAAGHMEAKNFSLQYVLLVAFVSVLLGFSFCVYLKSMSNDEASDMTYYYQDLNSVEIKLGKNPLDPEVIKAIHSFQEFPYGNIPSIRREAEFDVQNDESSAVVLSGSNNNRRQVASTPCENNVLLKLWKDDLSFTIIAVTVLVGAMLARC.

The Cytoplasmic portion of the chain corresponds to 1–52 (MDPPVILHSPNCSCQFCSSELPSTHTCGSQDRTVPLHVEATAAGHMEAKNFS). The helical transmembrane segment at 53 to 73 (LQYVLLVAFVSVLLGFSFCVY) threads the bilayer. The Lumenal segment spans residues 74–166 (LKSMSNDEAS…TPCENNVLLK (93 aa)). Tyrosine 89 and tyrosine 120 each carry phosphotyrosine. Residues 89–93 (YQDLN) carry the Involved in plasmodesmata targeting and virus cell-to-cell movement motif. The helical transmembrane segment at 167-187 (LWKDDLSFTIIAVTVLVGAML) threads the bilayer. Residues 188-190 (ARC) lie on the Cytoplasmic side of the membrane.

It belongs to the virgaviridae TGB3 movement protein family. Interacts with movement protein TGB2. TGB1-TGB3-TGB2 complex formation is enhanced by ATP hydrolysis.

The protein localises to the host cell junction. The protein resides in the host plasmodesma. Its subcellular location is the host endoplasmic reticulum membrane. It is found in the host cytoplasm. It localises to the host cytoskeleton. In terms of biological role, participates in the transport of viral genome to neighboring plant cells directly through plasmodesmata, without any budding. TGBp2 and TGBp3 are necessary for intracellular delivery of TGBp1-containing vRNPs to plasmodesmata. Can gate plasmodesmata and increase their size exclusion limit. Induces host actin cytoskeleton network thickening, which probably plays a major role in virus cell-to-cell movement. This is Movement protein TGB3 from Solanum nigrum (Black nightshade).